A 63-amino-acid chain; its full sequence is UPF0391 membrane protein lpg2415 (63 aa).

A run of 2 helical transmembrane segments spans residues 4–24 (WALI…RGVA) and 33–53 (VLFF…LLGG).

Belongs to the UPF0391 family.

It is found in the cell membrane. This is UPF0391 membrane protein lpg2415 from Legionella pneumophila subsp. pneumophila (strain Philadelphia 1 / ATCC 33152 / DSM 7513).